The chain runs to 773 residues: Histone-lysine N-methyltransferase mes-2 (773 aa).

Over residues 1-13 the composition is skewed to polar residues; that stretch reads MSNSEPSTSTPSG. A disordered region spans residues 1 to 33; sequence MSNSEPSTSTPSGKTKKRGKKCETSMGKSKKSK. Residues 1-194 form an interaction with mes-6 region; that stretch reads MSNSEPSTST…TPDQLRLTHM (194 aa). The region spanning 505–614 is the CXC domain; sequence IREDDMRDSQ…SNIIKCRNFG (110 aa). Residues 616 to 737 enclose the SET domain; the sequence is TRMIQKRTYC…ISEELTFDYS (122 aa). The tract at residues 749–773 is disordered; the sequence is VQTKERSEKPSRPKSQKLSKPMTSE. Residues 750–759 are compositionally biased toward basic and acidic residues; that stretch reads QTKERSEKPS.

Belongs to the class V-like SAM-binding methyltransferase superfamily. Histone-lysine methyltransferase family. EZ subfamily. As to quaternary structure, interacts directly with mes-6 via its N-terminal domain. Forms a heterotrimeric complex with mes-3 and mes-6. Does not interact with mes-4. In terms of tissue distribution, in adults, it is predominantly expressed in the germline, and weakly expressed in intestinal cells. Expressed in the hypoderm.

It localises to the nucleus. It catalyses the reaction L-lysyl(27)-[histone H3] + 3 S-adenosyl-L-methionine = N(6),N(6),N(6)-trimethyl-L-lysyl(27)-[histone H3] + 3 S-adenosyl-L-homocysteine + 3 H(+). In terms of biological role, polycomb group (PcG) protein. Catalytic subunit of a the mes-2/mes-3/mes-6 complex, which methylates 'Lys-27' of histone H3, leading to transcriptional repression of the affected target genes. PcG proteins act by forming multiprotein complexes, which are required to maintain the transcriptionally repressive state of homeotic genes throughout development. In association with the nfya-1-NF-Y complex, may play a role in repressing the expression of the homeobox protein egl-5 in tissues such as the head. PcG proteins are not required to initiate repression, but to maintain it during later stages of development. The mes-2/mes-3/mes-6 complex may participate in the global inactivation of the X chromosomes in germline cells. This complex is required to exclude mes-4 from the inactivated X-chromosomes in germline cells. Required for small-RNA-induced H3K27 trimethylation. Involved in the negative regulation of lifespan in a germline-independent fashion. This chain is Histone-lysine N-methyltransferase mes-2, found in Caenorhabditis elegans.